Reading from the N-terminus, the 435-residue chain is ATP-dependent protease ATPase subunit HslU (435 aa).

ATP is bound by residues I18, 60-65, D248, E313, and R385; that span reads GVGKTE.

Belongs to the ClpX chaperone family. HslU subfamily. In terms of assembly, a double ring-shaped homohexamer of HslV is capped on each side by a ring-shaped HslU homohexamer. The assembly of the HslU/HslV complex is dependent on binding of ATP.

It localises to the cytoplasm. Its function is as follows. ATPase subunit of a proteasome-like degradation complex; this subunit has chaperone activity. The binding of ATP and its subsequent hydrolysis by HslU are essential for unfolding of protein substrates subsequently hydrolyzed by HslV. HslU recognizes the N-terminal part of its protein substrates and unfolds these before they are guided to HslV for hydrolysis. This chain is ATP-dependent protease ATPase subunit HslU, found in Allorhizobium ampelinum (strain ATCC BAA-846 / DSM 112012 / S4) (Agrobacterium vitis (strain S4)).